The chain runs to 837 residues: A disintegrin and metalloproteinase with thrombospondin motifs 4 (837 aa).

Residues 1–51 (MSQTGSHPGRGLAGRWLWGAQPCLLLPIVPLSWLVWLLLLLLASLLPSARL) form the signal peptide. A propeptide spanning residues 52 to 212 (ASPLPREEEI…PSPRPRRAKR (161 aa)) is cleaved from the precursor. Asn-68 is a glycosylation site (N-linked (GlcNAc...) asparagine). Residues 166-191 (EGGTPNSAGGPGAHILRRKSPASGQG) are disordered. Positions 192–199 (PMCNVKAP) match the Cysteine switch motif. Cys-194 is a binding site for Zn(2+). Positions 218–428 (RFVETLVVAD…GYGHCLLDKP (211 aa)) constitute a Peptidase M12B domain. Disulfide bonds link Cys-293-Cys-345, Cys-322-Cys-327, Cys-339-Cys-423, Cys-377-Cys-407, Cys-449-Cys-472, Cys-460-Cys-482, Cys-467-Cys-501, Cys-495-Cys-506, Cys-532-Cys-569, Cys-536-Cys-574, and Cys-547-Cys-559. His-361 is a Zn(2+) binding site. Glu-362 is a catalytic residue. His-365 and His-371 together coordinate Zn(2+). In terms of domain architecture, Disintegrin spans 437 to 519 (TFPGKDYDAD…DQLQDFNIPQ (83 aa)). The TSP type-1 domain maps to 520 to 575 (AGGWGPWGPWGDCSRTCGGGVQFSSRDCTRPVPRNGGKYCEGRRTRFRSCNTEDCP). The interval 686–837 (SKQSGSFRKF…LRRRPWVGRK (152 aa)) is spacer.

In terms of assembly, interacts with SRPX2. Zn(2+) is required as a cofactor. Post-translationally, the precursor is cleaved by a furin endopeptidase. In terms of processing, glycosylated. Can be O-fucosylated by POFUT2 on a serine or a threonine residue found within the consensus sequence C1-X(2)-(S/T)-C2-G of the TSP type-1 repeat domains where C1 and C2 are the first and second cysteine residue of the repeat, respectively. Fucosylated repeats can then be further glycosylated by the addition of a beta-1,3-glucose residue by the glucosyltransferase, B3GALTL. Fucosylation mediates the efficient secretion of ADAMTS family members. Can also be C-glycosylated with one or two mannose molecules on tryptophan residues within the consensus sequence W-X-X-W of the TPRs, and N-glycosylated. These other glycosylations can also facilitate secretion.

It localises to the secreted. It is found in the extracellular space. Its subcellular location is the extracellular matrix. It carries out the reaction Glutamyl endopeptidase. Bonds cleaved include 370-Thr-Glu-Gly-Glu-|-Ala-Arg-Gly-Ser-377 in the interglobular domain of mammalian aggrecan.. In terms of biological role, cleaves aggrecan, a cartilage proteoglycan, at the '392-Glu-|-Ala-393' site and may be involved in its turnover. Also cleaves COMP. May play an important role in the destruction of aggrecan in arthritic diseases. This is A disintegrin and metalloproteinase with thrombospondin motifs 4 (ADAMTS4) from Pongo abelii (Sumatran orangutan).